Here is a 737-residue protein sequence, read N- to C-terminus: Phosphoribosylformylglycinamidine synthase subunit PurL (737 aa).

The active site involves His48. Positions 51 and 90 each coordinate ATP. Glu92 contributes to the Mg(2+) binding site. Substrate-binding positions include 93 to 96 (SHNH) and Arg115. His94 (proton acceptor) is an active-site residue. A Mg(2+)-binding site is contributed by Asp116. Position 244 (Gln244) interacts with substrate. Asp272 serves as a coordination point for Mg(2+). 316–318 (ESQ) is a substrate binding site. Residues Asp500 and Gly537 each contribute to the ATP site. Asn538 is a binding site for Mg(2+). Substrate is bound at residue Ser540.

Belongs to the FGAMS family. Monomer. Part of the FGAM synthase complex composed of 1 PurL, 1 PurQ and 2 PurS subunits.

It is found in the cytoplasm. The enzyme catalyses N(2)-formyl-N(1)-(5-phospho-beta-D-ribosyl)glycinamide + L-glutamine + ATP + H2O = 2-formamido-N(1)-(5-O-phospho-beta-D-ribosyl)acetamidine + L-glutamate + ADP + phosphate + H(+). The protein operates within purine metabolism; IMP biosynthesis via de novo pathway; 5-amino-1-(5-phospho-D-ribosyl)imidazole from N(2)-formyl-N(1)-(5-phospho-D-ribosyl)glycinamide: step 1/2. Its function is as follows. Part of the phosphoribosylformylglycinamidine synthase complex involved in the purines biosynthetic pathway. Catalyzes the ATP-dependent conversion of formylglycinamide ribonucleotide (FGAR) and glutamine to yield formylglycinamidine ribonucleotide (FGAM) and glutamate. The FGAM synthase complex is composed of three subunits. PurQ produces an ammonia molecule by converting glutamine to glutamate. PurL transfers the ammonia molecule to FGAR to form FGAM in an ATP-dependent manner. PurS interacts with PurQ and PurL and is thought to assist in the transfer of the ammonia molecule from PurQ to PurL. The chain is Phosphoribosylformylglycinamidine synthase subunit PurL from Sulfurimonas denitrificans (strain ATCC 33889 / DSM 1251) (Thiomicrospira denitrificans (strain ATCC 33889 / DSM 1251)).